Reading from the N-terminus, the 113-residue chain is Large ribosomal subunit protein bL19 (113 aa).

It belongs to the bacterial ribosomal protein bL19 family.

In terms of biological role, this protein is located at the 30S-50S ribosomal subunit interface and may play a role in the structure and function of the aminoacyl-tRNA binding site. The polypeptide is Large ribosomal subunit protein bL19 (Mycobacterium avium (strain 104)).